A 266-amino-acid chain; its full sequence is Enterotoxin type C-2 (266 aa).

An N-terminal signal peptide occupies residues methionine 1 to alanine 27. Residues aspartate 36, histidine 74, glutamate 98, glutamate 107, and aspartate 110 each contribute to the Zn(2+) site. Cysteine 120 and cysteine 137 form a disulfide bridge. The Zn(2+) site is built by histidine 145, glutamate 146, and histidine 149.

This sequence belongs to the staphylococcal/streptococcal toxin family. Interacts with host MHC class II molecules composed of alpha/HLA-DRA and beta/HLA-DRB1 chains. Requires Zn(2+) as cofactor.

Its subcellular location is the secreted. Functionally, staphylococcal enterotoxin that activates the host immune system by binding as unprocessed molecules to major histocompatibility (MHC) complex class II and T-cell receptor (TCR) molecules. In turn, this ternary complex activates a large number of T-lymphocytes initiating a systemic release of pro-inflammatory cytokines. Also causes the intoxication staphylococcal food poisoning syndrome. This chain is Enterotoxin type C-2 (entC2), found in Staphylococcus aureus.